Consider the following 179-residue polypeptide: Large ribosomal subunit protein uL6 (179 aa).

It belongs to the universal ribosomal protein uL6 family. In terms of assembly, part of the 50S ribosomal subunit.

In terms of biological role, this protein binds to the 23S rRNA, and is important in its secondary structure. It is located near the subunit interface in the base of the L7/L12 stalk, and near the tRNA binding site of the peptidyltransferase center. In Rippkaea orientalis (strain PCC 8801 / RF-1) (Cyanothece sp. (strain PCC 8801)), this protein is Large ribosomal subunit protein uL6.